The chain runs to 574 residues: Ankyrin repeat protein B18 (574 aa).

ANK repeat units follow at residues 56 to 87 (TGYT…DVTI), 135 to 164 (IKSR…DPNF), 167 to 213 (DGYT…NLNA), 217 to 249 (CGNT…NFEI), 253 to 285 (HGLT…NVGE), and 327 to 356 (EGKT…DINA). One can recognise an F-box domain in the interval 541 to 574 (KCLLTLLPSEIIYEILYMLTIYDLYNISYPPTKV).

The protein is Ankyrin repeat protein B18 of Variola virus (isolate Human/India/Ind3/1967) (VARV).